A 380-amino-acid polypeptide reads, in one-letter code: MIVKRLNPDALKNALQKIGPEKIAQDRMHQKGVSFVFEIQHLPLSATLILKQEAISVGGDFATPRDCILAKEPFYDGVLIASAKQLERLIVKCHSQPFGLKHLAQELKSHLKAPKPNTPQIMAVLNLTPDSFYEKSRFDSKKALEEIYQWLEKGITLIDIGAASSRPESEIIDPKIEQDRLKEILLEIKSQKLYQCAKFSIDTYHATTAQMALEHYFSILNDVSGFNSAEMLEVAKDYKPTCILMHTQKTPKDMQENVFYHNLFDEMDRFFKEKLEVLEKYVLQDIILDIGFGFAKLKEHNLALIKHLSHFLKFKKPLLVGASRKNTIGLITGREVQDRLAGTLSLHLMALQNGASVLRVHDIDEHIDLIKVFKSLEETD.

The tract at residues 1 to 104 (MIVKRLNPDA…SQPFGLKHLA (104 aa)) is dihydropteroate reductase. Residues 105–380 (QELKSHLKAP…KVFKSLEETD (276 aa)) form a dihydropteroate synthase region. The 253-residue stretch at 119-371 (PQIMAVLNLT…DIDEHIDLIK (253 aa)) folds into the Pterin-binding domain. Asparagine 126 provides a ligand contact to Mg(2+). Residues aspartate 202, asparagine 221, aspartate 289, lysine 325, and 359-361 (RVH) each bind (7,8-dihydropterin-6-yl)methyl diphosphate.

This sequence in the C-terminal section; belongs to the DHPS family. Requires FAD as cofactor. The cofactor is FMN. Mg(2+) is required as a cofactor.

It carries out the reaction (7,8-dihydropterin-6-yl)methyl diphosphate + 4-aminobenzoate = 7,8-dihydropteroate + diphosphate. It catalyses the reaction (6S)-5,6,7,8-tetrahydropteroate + NAD(+) = 7,8-dihydropteroate + NADH + H(+). It functions in the pathway cofactor biosynthesis; tetrahydrofolate biosynthesis; 7,8-dihydrofolate from 2-amino-4-hydroxy-6-hydroxymethyl-7,8-dihydropteridine diphosphate and 4-aminobenzoate: step 1/2. In terms of biological role, bifunctional enzyme that catalyzes the formation of dihydropteroate, the immediate precursor of folic acid and the reduction of dihydropteroate to tetrahydropteroate. This chain is Bifunctional dihydropteroate synthase/dihydropteroate reductase, found in Helicobacter pylori (strain ATCC 700392 / 26695) (Campylobacter pylori).